Reading from the N-terminus, the 481-residue chain is CASP8 and FADD-like apoptosis regulator (481 aa).

DED domains follow at residues 6–78 (VSAE…RILK) and 97–172 (DYRV…LNTK). An interaction with CASP8 region spans residues 6-200 (VSAEVIHQVE…QASLPKLSIK (195 aa)). The segment at 6 to 229 (VSAEVIHQVE…DSQRTLVKTS (224 aa)) is interaction with FADD. The segment at 6 to 307 (VSAEVIHQVE…YASMAQHQDY (302 aa)) is interaction with CASP8 propeptide. The interval 197 to 436 (LSIKYNSRLQ…KLSQQLKQGR (240 aa)) is interaction with CASP3. The interval 197–481 (LSIKYNSRLQ…LRKKLILAPT (285 aa)) is interaction with TRAF1 and TRAF2. Residues 219-481 (RDSQRTLVKT…LRKKLILAPT (263 aa)) form an interaction with CASP8 subunits p18 and p10 region. A caspase region spans residues 265 to 360 (DTKYLQETFT…RGKPKLFFIQ (96 aa)). Positions 372-481 (SSLEVDGPSI…LRKKLILAPT (110 aa)) are interaction with CASP8.

The protein belongs to the peptidase C14A family. TNFRSF6 stimulation triggers recruitment to the death-inducing signaling complex (DISC) formed by TNFRSF6, FADD and CASP8. A proteolytic fragment (p43) stays associated with the DISC. Interacts with RIPK1. Post-translationally, proteolytically processed by CASP8 generating subunits p43 and p12. Highly expressed in heart.

Apoptosis regulator protein which may function as a crucial link between cell survival and cell death pathways in mammalian cells. Acts as an inhibitor of TNFRSF6 mediated apoptosis. A proteolytic fragment (p43) is likely retained in the death-inducing signaling complex (DISC) thereby blocking further recruitment and processing of caspase-8 at the complex. Full length and shorter isoforms have been shown either to induce apoptosis or to reduce TNFRSF-triggered apoptosis. Lacks enzymatic (caspase) activity. The sequence is that of CASP8 and FADD-like apoptosis regulator (Cflar) from Mus musculus (Mouse).